We begin with the raw amino-acid sequence, 120 residues long: Large ribosomal subunit protein bL20 (120 aa).

The protein belongs to the bacterial ribosomal protein bL20 family.

Its function is as follows. Binds directly to 23S ribosomal RNA and is necessary for the in vitro assembly process of the 50S ribosomal subunit. It is not involved in the protein synthesizing functions of that subunit. The chain is Large ribosomal subunit protein bL20 from Methylacidiphilum infernorum (isolate V4) (Methylokorus infernorum (strain V4)).